The sequence spans 188 residues: Elongation factor P-like protein (188 aa).

This sequence belongs to the elongation factor P family.

The chain is Elongation factor P-like protein from Vibrio parahaemolyticus serotype O3:K6 (strain RIMD 2210633).